The sequence spans 333 residues: D-alanine--D-alanine ligase (333 aa).

The ATP-grasp domain occupies 124 to 329; sequence KMWFSALGIR…FAQYLSGNIM (206 aa). Residue 154–209 coordinates ATP; it reads ALEKWGSIFIKAASQGSSVGCYRVDNKEQLANSLEEAFKYSPYVVVEKTINARELE. Asp-283, Glu-296, and Asn-298 together coordinate Mg(2+).

It belongs to the D-alanine--D-alanine ligase family. Mg(2+) serves as cofactor. The cofactor is Mn(2+).

The protein resides in the cytoplasm. It catalyses the reaction 2 D-alanine + ATP = D-alanyl-D-alanine + ADP + phosphate + H(+). It participates in cell wall biogenesis; peptidoglycan biosynthesis. Its function is as follows. Cell wall formation. The chain is D-alanine--D-alanine ligase from Shewanella halifaxensis (strain HAW-EB4).